Here is a 102-residue protein sequence, read N- to C-terminus: Small ribosomal subunit protein uS10 (102 aa).

It belongs to the universal ribosomal protein uS10 family. In terms of assembly, part of the 30S ribosomal subunit.

Its function is as follows. Involved in the binding of tRNA to the ribosomes. This is Small ribosomal subunit protein uS10 from Streptomyces griseus subsp. griseus (strain JCM 4626 / CBS 651.72 / NBRC 13350 / KCC S-0626 / ISP 5235).